We begin with the raw amino-acid sequence, 68 residues long: Large ribosomal subunit protein uL29 (68 aa).

It belongs to the universal ribosomal protein uL29 family.

This Pyrococcus abyssi (strain GE5 / Orsay) protein is Large ribosomal subunit protein uL29 (rpl29).